The sequence spans 289 residues: Digeranylgeranylglyceryl phosphate synthase (289 aa).

Helical transmembrane passes span Leu-18–Gly-38, Ala-47–Gly-67, Phe-99–Ile-119, Cys-120–Gly-140, Ile-163–Ile-183, Leu-218–Val-238, Tyr-243–Val-263, and Lys-269–Val-289.

It belongs to the UbiA prenyltransferase family. DGGGP synthase subfamily. Mg(2+) serves as cofactor.

Its subcellular location is the cell membrane. It catalyses the reaction sn-3-O-(geranylgeranyl)glycerol 1-phosphate + (2E,6E,10E)-geranylgeranyl diphosphate = 2,3-bis-O-(geranylgeranyl)-sn-glycerol 1-phosphate + diphosphate. Its pathway is membrane lipid metabolism; glycerophospholipid metabolism. Its function is as follows. Prenyltransferase that catalyzes the transfer of the geranylgeranyl moiety of geranylgeranyl diphosphate (GGPP) to the C2 hydroxyl of (S)-3-O-geranylgeranylglyceryl phosphate (GGGP). This reaction is the second ether-bond-formation step in the biosynthesis of archaeal membrane lipids. This Methanosarcina mazei (strain ATCC BAA-159 / DSM 3647 / Goe1 / Go1 / JCM 11833 / OCM 88) (Methanosarcina frisia) protein is Digeranylgeranylglyceryl phosphate synthase.